Consider the following 229-residue polypeptide: Uracil-DNA glycosylase (229 aa).

D64 acts as the Proton acceptor in catalysis.

Belongs to the uracil-DNA glycosylase (UDG) superfamily. UNG family.

The protein resides in the cytoplasm. It carries out the reaction Hydrolyzes single-stranded DNA or mismatched double-stranded DNA and polynucleotides, releasing free uracil.. Excises uracil residues from the DNA which can arise as a result of misincorporation of dUMP residues by DNA polymerase or due to deamination of cytosine. In Shigella flexneri serotype 5b (strain 8401), this protein is Uracil-DNA glycosylase.